Consider the following 317-residue polypeptide: NAD kinase (317 aa).

Residue aspartate 82 is the Proton acceptor of the active site. Residues 82 to 83, arginine 87, 157 to 158, aspartate 187, and 198 to 203 contribute to the NAD(+) site; these read DG, NE, and TAYAFS.

This sequence belongs to the NAD kinase family. Requires a divalent metal cation as cofactor.

The protein localises to the cytoplasm. It carries out the reaction NAD(+) + ATP = ADP + NADP(+) + H(+). In terms of biological role, involved in the regulation of the intracellular balance of NAD and NADP, and is a key enzyme in the biosynthesis of NADP. Catalyzes specifically the phosphorylation on 2'-hydroxyl of the adenosine moiety of NAD to yield NADP. This Corynebacterium diphtheriae (strain ATCC 700971 / NCTC 13129 / Biotype gravis) protein is NAD kinase.